The chain runs to 394 residues: Putative fimbrial assembly protein FimD, serogroup D (394 aa).

The polypeptide is Putative fimbrial assembly protein FimD, serogroup D (fimD) (Dichelobacter nodosus (Bacteroides nodosus)).